The following is a 106-amino-acid chain: Large ribosomal subunit protein uL24 (106 aa).

It belongs to the universal ribosomal protein uL24 family. Part of the 50S ribosomal subunit.

In terms of biological role, one of two assembly initiator proteins, it binds directly to the 5'-end of the 23S rRNA, where it nucleates assembly of the 50S subunit. Functionally, one of the proteins that surrounds the polypeptide exit tunnel on the outside of the subunit. The sequence is that of Large ribosomal subunit protein uL24 from Orientia tsutsugamushi (strain Boryong) (Rickettsia tsutsugamushi).